A 145-amino-acid polypeptide reads, in one-letter code: Large ribosomal subunit protein uL13 (145 aa).

It belongs to the universal ribosomal protein uL13 family. Part of the 50S ribosomal subunit.

This protein is one of the early assembly proteins of the 50S ribosomal subunit, although it is not seen to bind rRNA by itself. It is important during the early stages of 50S assembly. The sequence is that of Large ribosomal subunit protein uL13 from Bacillus pumilus (strain SAFR-032).